The primary structure comprises 172 residues: Caltractin (172 aa).

Residues 1–23 (MQKYGSKKIGATSATSSNKQKVQ) are disordered. Over residues 12-21 (TSATSSNKQK) the composition is skewed to polar residues. EF-hand domains lie at 29–64 (EQRQ…LGFE), 65–99 (PKKE…KMSE), 101–136 (DSHA…LGEN), and 137–172 (MTDE…TNLF). Ca(2+) is bound by residues aspartate 42, aspartate 44, serine 46, lysine 48, and glutamate 53.

Belongs to the centrin family. In terms of assembly, monomer.

The protein resides in the cytoplasm. It localises to the cytoskeleton. The protein localises to the microtubule organizing center. Its subcellular location is the centrosome. Functionally, plays a fundamental role in microtubule-organizing center structure and function. The polypeptide is Caltractin (CTN) (Naegleria gruberi (Amoeba)).